The sequence spans 467 residues: Argininosuccinate lyase (467 aa).

It belongs to the lyase 1 family. Argininosuccinate lyase subfamily.

It is found in the cytoplasm. The enzyme catalyses 2-(N(omega)-L-arginino)succinate = fumarate + L-arginine. The protein operates within amino-acid biosynthesis; L-arginine biosynthesis; L-arginine from L-ornithine and carbamoyl phosphate: step 3/3. This Rhizobium etli (strain ATCC 51251 / DSM 11541 / JCM 21823 / NBRC 15573 / CFN 42) protein is Argininosuccinate lyase.